Consider the following 85-residue polypeptide: CRISPR-associated endoribonuclease Cas2 (85 aa).

Asp-8 serves as a coordination point for Mg(2+).

This sequence belongs to the CRISPR-associated endoribonuclease Cas2 protein family. Homodimer, forms a heterotetramer with a Cas1 homodimer. The cofactor is Mg(2+).

CRISPR (clustered regularly interspaced short palindromic repeat), is an adaptive immune system that provides protection against mobile genetic elements (viruses, transposable elements and conjugative plasmids). CRISPR clusters contain sequences complementary to antecedent mobile elements and target invading nucleic acids. CRISPR clusters are transcribed and processed into CRISPR RNA (crRNA). Functions as a ssRNA-specific endoribonuclease. Involved in the integration of spacer DNA into the CRISPR cassette. In Thermococcus kodakarensis (strain ATCC BAA-918 / JCM 12380 / KOD1) (Pyrococcus kodakaraensis (strain KOD1)), this protein is CRISPR-associated endoribonuclease Cas2.